Here is a 448-residue protein sequence, read N- to C-terminus: Asparagine--tRNA ligase (448 aa).

The protein belongs to the class-II aminoacyl-tRNA synthetase family. Homodimer.

Its subcellular location is the cytoplasm. The catalysed reaction is tRNA(Asn) + L-asparagine + ATP = L-asparaginyl-tRNA(Asn) + AMP + diphosphate + H(+). The chain is Asparagine--tRNA ligase from Streptococcus thermophilus (strain CNRZ 1066).